A 444-amino-acid polypeptide reads, in one-letter code: MAYGGPSMNPPALSGAVPGSANLKQVKLERESELRIEVSEEPLRLRVVNGTAEIFGSELPPEIWRTFPPRMKFAVFTWYGATIEMDGVTETDYTADETPMVSYINVHAILDARRRFAKASTSNDPESSQGPRVIVVGPTDSGKSTLTKMLLSWAAKQGWRPTFVDLDVGQGSITIPGSIAAAPIEMPLDPVEGFPLDMALVYYYGHASPNMNVELYKALVKELAQVLEKQFVGNPESRAAGMVINTMGWIEGIGYELLLHAIDTFNASVVLVLGQEKLFSRLKDVLRSKSNVDVVKLHKSGGVVARVKEVRKRSRNFKIQEYFYGLSKELSPYANTSSFSDLQVFRIGGGPQAPKSALPAGSTSVSNPLRVTPVNIDDRDLLHSVLAVSYAEEPDQIISSNVSGFVYVTEVNVQKKKITYLAPSPGTLPSKLLVAGSLAWLESV.

Residues Glu-33, Lys-72, and 140-145 (DSGKST) contribute to the ATP site.

This sequence belongs to the Clp1 family. Clp1 subfamily. In terms of assembly, interacts with PCFS4 and SYM5. Forms a complex with cleavage and polyadenylation specificity factor (CPSF) subunits CPSF30, CPSF100, PCFS1, PCFS4, PCFS5, CPSF160 and FY.

The protein localises to the nucleus. Functionally, required for endonucleolytic cleavage during polyadenylation-dependent pre-mRNA 3'-end formation. Functions in gametophyte, embryo and postembryotic development. The protein is Protein CLP1 homolog (CLPS3) of Arabidopsis thaliana (Mouse-ear cress).